The primary structure comprises 298 residues: UPF0282 protein Kcr_0286 (298 aa).

Belongs to the UPF0282 family.

The protein is UPF0282 protein Kcr_0286 of Korarchaeum cryptofilum (strain OPF8).